The chain runs to 456 residues: Phosphatidylinositol N-acetylglucosaminyltransferase gpi3 subunit (456 aa).

It belongs to the glycosyltransferase group 1 family. Glycosyltransferase 4 subfamily. Component of a Phosphatidylinositol N-acetylglucosaminyltransferase complex.

It catalyses the reaction a 1,2-diacyl-sn-glycero-3-phospho-(1D-myo-inositol) + UDP-N-acetyl-alpha-D-glucosamine = a 6-(N-acetyl-alpha-D-glucosaminyl)-1-(1,2-diacyl-sn-glycero-3-phospho)-1D-myo-inositol + UDP + H(+). The protein operates within glycolipid biosynthesis; glycosylphosphatidylinositol-anchor biosynthesis. Its function is as follows. Catalytic subunit in the complex catalyzing the transfer of N-acetylglucosamine from UDP-N-acetylglucosamine to phosphatidylinositol, the first step of GPI biosynthesis. This chain is Phosphatidylinositol N-acetylglucosaminyltransferase gpi3 subunit (gpi3), found in Schizosaccharomyces pombe (strain 972 / ATCC 24843) (Fission yeast).